Reading from the N-terminus, the 355-residue chain is Protein RecA (355 aa).

An ATP-binding site is contributed by 67-74; the sequence is GPESSGKT. The interval 336 to 355 is disordered; the sequence is NSAASDYEDNENEEMNNEEF. The segment covering 341-355 has biased composition (acidic residues); that stretch reads DYEDNENEEMNNEEF.

The protein belongs to the RecA family.

It is found in the cytoplasm. Its function is as follows. Can catalyze the hydrolysis of ATP in the presence of single-stranded DNA, the ATP-dependent uptake of single-stranded DNA by duplex DNA, and the ATP-dependent hybridization of homologous single-stranded DNAs. It interacts with LexA causing its activation and leading to its autocatalytic cleavage. The protein is Protein RecA of Photorhabdus laumondii subsp. laumondii (strain DSM 15139 / CIP 105565 / TT01) (Photorhabdus luminescens subsp. laumondii).